We begin with the raw amino-acid sequence, 118 residues long: Small ribosomal subunit protein uS13 (118 aa).

The disordered stretch occupies residues 91-118 (HRRGLPVRGQRTKTNARTRKGPRKPIKK).

It belongs to the universal ribosomal protein uS13 family. Part of the 30S ribosomal subunit. Forms a loose heterodimer with protein S19. Forms two bridges to the 50S subunit in the 70S ribosome.

Functionally, located at the top of the head of the 30S subunit, it contacts several helices of the 16S rRNA. In the 70S ribosome it contacts the 23S rRNA (bridge B1a) and protein L5 of the 50S subunit (bridge B1b), connecting the 2 subunits; these bridges are implicated in subunit movement. Contacts the tRNAs in the A and P-sites. The chain is Small ribosomal subunit protein uS13 from Photorhabdus laumondii subsp. laumondii (strain DSM 15139 / CIP 105565 / TT01) (Photorhabdus luminescens subsp. laumondii).